Consider the following 72-residue polypeptide: DNA-directed RNA polymerase subunit omega (72 aa).

It belongs to the RNA polymerase subunit omega family. The RNAP catalytic core consists of 2 alpha, 1 beta, 1 beta' and 1 omega subunit. When a sigma factor is associated with the core the holoenzyme is formed, which can initiate transcription.

The catalysed reaction is RNA(n) + a ribonucleoside 5'-triphosphate = RNA(n+1) + diphosphate. In terms of biological role, promotes RNA polymerase assembly. Latches the N- and C-terminal regions of the beta' subunit thereby facilitating its interaction with the beta and alpha subunits. The chain is DNA-directed RNA polymerase subunit omega from Clostridium beijerinckii (strain ATCC 51743 / NCIMB 8052) (Clostridium acetobutylicum).